Consider the following 665-residue polypeptide: DNA mismatch repair protein MutL (665 aa).

2 stretches are compositionally biased toward polar residues: residues 348-361 and 407-421; these read LEAT…NGLS and PSSQ…NSRY. Disordered regions lie at residues 348 to 370 and 385 to 445; these read LEAT…AEEG and VHRG…STSA. The segment covering 426 to 445 has biased composition (low complexity); it reads YSTNAASTNTASNYSHSTSA.

Belongs to the DNA mismatch repair MutL/HexB family.

This protein is involved in the repair of mismatches in DNA. It is required for dam-dependent methyl-directed DNA mismatch repair. May act as a 'molecular matchmaker', a protein that promotes the formation of a stable complex between two or more DNA-binding proteins in an ATP-dependent manner without itself being part of a final effector complex. The chain is DNA mismatch repair protein MutL from Shewanella denitrificans (strain OS217 / ATCC BAA-1090 / DSM 15013).